A 100-amino-acid chain; its full sequence is Small ribosomal subunit protein uS14c (100 aa).

The protein belongs to the universal ribosomal protein uS14 family. Part of the 30S ribosomal subunit.

Its subcellular location is the plastid. It is found in the chloroplast. Its function is as follows. Binds 16S rRNA, required for the assembly of 30S particles. This Barbarea verna (Land cress) protein is Small ribosomal subunit protein uS14c.